The chain runs to 171 residues: Ribosome maturation factor RimP (171 aa).

Belongs to the RimP family.

Its subcellular location is the cytoplasm. Functionally, required for maturation of 30S ribosomal subunits. The chain is Ribosome maturation factor RimP from Anaeromyxobacter sp. (strain K).